The following is a 101-amino-acid chain: Small ribosomal subunit protein uS14 (101 aa).

A disordered region spans residues 1–24; sequence MAKVSSIKKNEKRKKLSQSLHNKR. The segment covering 10-24 has biased composition (basic residues); the sequence is NEKRKKLSQSLHNKR.

It belongs to the universal ribosomal protein uS14 family. Part of the 30S ribosomal subunit. Contacts proteins S3 and S10.

In terms of biological role, binds 16S rRNA, required for the assembly of 30S particles and may also be responsible for determining the conformation of the 16S rRNA at the A site. The sequence is that of Small ribosomal subunit protein uS14 from Rickettsia bellii (strain OSU 85-389).